Here is a 160-residue protein sequence, read N- to C-terminus: Cell division protein SepF (160 aa).

Positions 18–30 are enriched in acidic residues; sequence AEGEDDFEDDVDT. The disordered stretch occupies residues 18–72; sequence AEGEDDFEDDVDTGETSFDSDHSVTPMPSSSASASTPSAPREQSNPFQGGRVSRI. The span at 45–57 shows a compositional bias: low complexity; sequence PSSSASASTPSAP.

This sequence belongs to the SepF family. In terms of assembly, homodimer. Interacts with FtsZ.

The protein localises to the cytoplasm. Cell division protein that is part of the divisome complex and is recruited early to the Z-ring. Probably stimulates Z-ring formation, perhaps through the cross-linking of FtsZ protofilaments. Its function overlaps with FtsA. The protein is Cell division protein SepF of Bifidobacterium adolescentis (strain ATCC 15703 / DSM 20083 / NCTC 11814 / E194a).